The chain runs to 59 residues: UPF0434 protein lpl1884 (59 aa).

Belongs to the UPF0434 family.

The chain is UPF0434 protein lpl1884 from Legionella pneumophila (strain Lens).